The chain runs to 1429 residues: Autophagy-related protein 11 (1429 aa).

4 coiled-coil regions span residues 540 to 579 (GDDD…QSQA), 616 to 808 (EGID…LDDH), 842 to 985 (TLVE…HMNS), and 1106 to 1135 (RRIK…LQKD). Positions 574 to 622 (HRQSQASRPGNLFQPQGSQQRERVNSASSVRSSRFDDRRRSSEGIDPLM) are disordered. A compositionally biased stretch (polar residues) spans 575–592 (RQSQASRPGNLFQPQGSQ). The segment covering 606–616 (SRFDDRRRSSE) has biased composition (basic and acidic residues). 2 disordered regions span residues 1205-1224 (SKSL…ENDN) and 1333-1405 (RAHN…PTRR). Polar residues-rich tracts occupy residues 1206-1215 (KSLQPSSETE) and 1333-1362 (RAHN…GQKN). The span at 1384-1398 (KADEQPRSVVQREDS) shows a compositional bias: basic and acidic residues.

The protein belongs to the ATG11 family. Homodimer and potential homooligomers. Interacts with ATG1 kinase and the ATG19 and ATG34 cargo protein transporters. Interacts with ATG9, ATG17 and ATG20.

Its subcellular location is the preautophagosomal structure membrane. The protein localises to the vacuole membrane. Functionally, involved in cytoplasm to vacuole transport (Cvt), pexophagy, mitophagy and nucleophagy. Recruits mitochondria for their selective degradation via autophagy (mitophagy) during starvation, through its interaction with ATG32. Works as scaffold proteins that recruit ATG proteins to the pre-autophagosome (PAS), the site of vesicle/autophagosome formation. Required for ATG9 anterograde transport from the mitochondria to the PAS. Also recruits the ATG19-prAPE1 complex to the PAS. Required for the Cvt vesicles completion. Autophagy is required for proper vegetative growth, asexual/sexual reproduction, and full virulence. Autophagy is particularly involved in the biosynthesis of deoxynivalenol (DON), an important virulence determinant. The sequence is that of Autophagy-related protein 11 from Gibberella zeae (strain ATCC MYA-4620 / CBS 123657 / FGSC 9075 / NRRL 31084 / PH-1) (Wheat head blight fungus).